The following is a 470-amino-acid chain: Aminodeoxychorismate synthase component 1 (470 aa).

This sequence belongs to the anthranilate synthase component I family. As to quaternary structure, monomer. Heterodimer consisting of two non-identical subunits: a glutamine amidotransferase subunit (PabA) and a aminodeoxychorismate synthase subunit (PabB). The cofactor is Mg(2+).

It carries out the reaction chorismate + L-glutamine = 4-amino-4-deoxychorismate + L-glutamate. It functions in the pathway cofactor biosynthesis; tetrahydrofolate biosynthesis; 4-aminobenzoate from chorismate: step 1/2. Functionally, part of a heterodimeric complex that catalyzes the two-step biosynthesis of 4-amino-4-deoxychorismate (ADC), a precursor of p-aminobenzoate (PABA) and tetrahydrofolate. In the first step, a glutamine amidotransferase (PabA) generates ammonia as a substrate that, along with chorismate, is used in the second step, catalyzed by aminodeoxychorismate synthase (PabB) to produce ADC. The protein is Aminodeoxychorismate synthase component 1 (pabB) of Bacillus subtilis (strain 168).